Here is a 458-residue protein sequence, read N- to C-terminus: Hyaluronidase conohyal-P1 (458 aa).

Residues 1-18 (MRVVVVVTGLVVVVVATA) form the signal peptide. Residues 24-47 (HDVKSASSPLSSSSVYQGSSGDDC) are disordered. Residues 28 to 43 (SASSPLSSSSVYQGSS) show a composition bias toward low complexity. Cysteine 68 and cysteine 342 form a disulfide bridge. N-linked (GlcNAc...) asparagine glycosylation is found at asparagine 106 and asparagine 141. Glutamate 151 (proton donor) is an active-site residue. N-linked (GlcNAc...) asparagine glycans are attached at residues asparagine 261, asparagine 337, and asparagine 359. The 72-residue stretch at 363–434 (VMADCSTTLC…VRPSRCHKQQ (72 aa)) folds into the EGF-like domain. 3 disulfide bridges follow: cysteine 367–cysteine 378, cysteine 372–cysteine 411, and cysteine 413–cysteine 422.

It belongs to the glycosyl hydrolase 56 family. Expressed by the venom duct.

It is found in the secreted. The enzyme catalyses Random hydrolysis of (1-&gt;4)-linkages between N-acetyl-beta-D-glucosamine and D-glucuronate residues in hyaluronate.. Hyaluronidase catalyzes the hydrolysis of hyaluronic acid (HA), an anionic, nonsulfated glycosaminoglycan distributed widely throughout connective, epithelial, and neural tissues. In venom, they are known to enhance diffusion of the venom by degrading the extracellular matrix. This chain is Hyaluronidase conohyal-P1, found in Conus purpurascens (Purple cone).